Here is an 887-residue protein sequence, read N- to C-terminus: Valine--tRNA ligase (887 aa).

Residues 45–55 (PNVTGILHMGH) carry the 'HIGH' region motif. Positions 528 to 532 (KMSKS) match the 'KMSKS' region motif. K531 contributes to the ATP binding site. A coiled-coil region spans residues 817-887 (TGLLNNEAEI…LKESLKSFEE (71 aa)).

Belongs to the class-I aminoacyl-tRNA synthetase family. ValS type 1 subfamily. In terms of assembly, monomer.

It localises to the cytoplasm. The enzyme catalyses tRNA(Val) + L-valine + ATP = L-valyl-tRNA(Val) + AMP + diphosphate. Functionally, catalyzes the attachment of valine to tRNA(Val). As ValRS can inadvertently accommodate and process structurally similar amino acids such as threonine, to avoid such errors, it has a 'posttransfer' editing activity that hydrolyzes mischarged Thr-tRNA(Val) in a tRNA-dependent manner. The protein is Valine--tRNA ligase of Fusobacterium nucleatum subsp. nucleatum (strain ATCC 25586 / DSM 15643 / BCRC 10681 / CIP 101130 / JCM 8532 / KCTC 2640 / LMG 13131 / VPI 4355).